The primary structure comprises 225 residues: MLTQQELKQQAADAALALIEPLLGPDVIIGVGTGSTADLFIDGLARYRDRLRGTVASSERSAARLAGHGITVLDLNDVTSMPVYVDGADEIDARLHMIKGGGGAQTREKIVASVADRYICIVDESKLVERLGSFPLPVEVIPMARQAVARALVALGGQPRLREGFTTDNGNIILDVAGLQIDDAPALELTVNNLPGVVTCGLFARPGADVALLATQNGIRRLERP.

Residues 33-36 (TGST), 86-89 (DGAD), and 99-102 (KGGG) each bind substrate. Residue glutamate 108 is the Proton acceptor of the active site. Position 126 (lysine 126) interacts with substrate.

Belongs to the ribose 5-phosphate isomerase family. Homodimer.

The catalysed reaction is aldehydo-D-ribose 5-phosphate = D-ribulose 5-phosphate. Its pathway is carbohydrate degradation; pentose phosphate pathway; D-ribose 5-phosphate from D-ribulose 5-phosphate (non-oxidative stage): step 1/1. In terms of biological role, catalyzes the reversible conversion of ribose-5-phosphate to ribulose 5-phosphate. The protein is Ribose-5-phosphate isomerase A of Bordetella petrii (strain ATCC BAA-461 / DSM 12804 / CCUG 43448).